The sequence spans 693 residues: Phosphoribosylformylglycinamidine synthase subunit PurL (693 aa).

Residue His34 is part of the active site. ATP contacts are provided by Tyr37 and Lys76. Glu78 serves as a coordination point for Mg(2+). Residues 79–82 (SHNH) and Arg101 each bind substrate. His80 functions as the Proton acceptor in the catalytic mechanism. Position 102 (Asp102) interacts with Mg(2+). Gln222 lines the substrate pocket. Mg(2+) is bound at residue Asp248. 292–294 (ETQ) is a binding site for substrate. ATP is bound by residues Asp470 and Gly507. Ser510 is a substrate binding site.

It belongs to the FGAMS family. Monomer. Part of the FGAM synthase complex composed of 1 PurL, 1 PurQ and 2 PurS subunits.

Its subcellular location is the cytoplasm. It carries out the reaction N(2)-formyl-N(1)-(5-phospho-beta-D-ribosyl)glycinamide + L-glutamine + ATP + H2O = 2-formamido-N(1)-(5-O-phospho-beta-D-ribosyl)acetamidine + L-glutamate + ADP + phosphate + H(+). It functions in the pathway purine metabolism; IMP biosynthesis via de novo pathway; 5-amino-1-(5-phospho-D-ribosyl)imidazole from N(2)-formyl-N(1)-(5-phospho-D-ribosyl)glycinamide: step 1/2. Its function is as follows. Part of the phosphoribosylformylglycinamidine synthase complex involved in the purines biosynthetic pathway. Catalyzes the ATP-dependent conversion of formylglycinamide ribonucleotide (FGAR) and glutamine to yield formylglycinamidine ribonucleotide (FGAM) and glutamate. The FGAM synthase complex is composed of three subunits. PurQ produces an ammonia molecule by converting glutamine to glutamate. PurL transfers the ammonia molecule to FGAR to form FGAM in an ATP-dependent manner. PurS interacts with PurQ and PurL and is thought to assist in the transfer of the ammonia molecule from PurQ to PurL. This chain is Phosphoribosylformylglycinamidine synthase subunit PurL, found in Pyrobaculum islandicum (strain DSM 4184 / JCM 9189 / GEO3).